A 430-amino-acid polypeptide reads, in one-letter code: Enolase (430 aa).

A (2R)-2-phosphoglycerate-binding site is contributed by Gln165. The active-site Proton donor is the Glu207. The Mg(2+) site is built by Asp244, Glu287, and Asp314. 4 residues coordinate (2R)-2-phosphoglycerate: Lys339, Arg368, Ser369, and Lys390. The active-site Proton acceptor is the Lys339.

It belongs to the enolase family. In terms of assembly, component of the RNA degradosome, a multiprotein complex involved in RNA processing and mRNA degradation. Requires Mg(2+) as cofactor.

The protein localises to the cytoplasm. It is found in the secreted. The protein resides in the cell surface. It carries out the reaction (2R)-2-phosphoglycerate = phosphoenolpyruvate + H2O. It participates in carbohydrate degradation; glycolysis; pyruvate from D-glyceraldehyde 3-phosphate: step 4/5. Catalyzes the reversible conversion of 2-phosphoglycerate (2-PG) into phosphoenolpyruvate (PEP). It is essential for the degradation of carbohydrates via glycolysis. In Xanthomonas euvesicatoria pv. vesicatoria (strain 85-10) (Xanthomonas campestris pv. vesicatoria), this protein is Enolase.